Here is a 326-residue protein sequence, read N- to C-terminus: DNA-directed RNA polymerase subunit alpha (326 aa).

Residues 1-231 (MQTALLKPKI…DQLSVFAALE (231 aa)) are alpha N-terminal domain (alpha-NTD). Residues 247-326 (IDPILLRPVD…ENWPPAGLEK (80 aa)) form an alpha C-terminal domain (alpha-CTD) region.

The protein belongs to the RNA polymerase alpha chain family. As to quaternary structure, homodimer. The RNAP catalytic core consists of 2 alpha, 1 beta, 1 beta' and 1 omega subunit. When a sigma factor is associated with the core the holoenzyme is formed, which can initiate transcription.

It catalyses the reaction RNA(n) + a ribonucleoside 5'-triphosphate = RNA(n+1) + diphosphate. DNA-dependent RNA polymerase catalyzes the transcription of DNA into RNA using the four ribonucleoside triphosphates as substrates. The chain is DNA-directed RNA polymerase subunit alpha from Cupriavidus necator (strain ATCC 17699 / DSM 428 / KCTC 22496 / NCIMB 10442 / H16 / Stanier 337) (Ralstonia eutropha).